Reading from the N-terminus, the 239-residue chain is Lactate utilization protein A (239 aa).

Belongs to the LutA/YkgE family.

Functionally, is involved in L-lactate degradation and allows cells to grow with lactate as the sole carbon source. This chain is Lactate utilization protein A, found in Bacillus cereus (strain G9842).